The primary structure comprises 454 residues: (Z)-3-hexen-1-ol acetyltransferase (454 aa).

Residues His-174 and Asp-389 each act as proton acceptor in the active site.

It belongs to the plant acyltransferase family. Expressed in leaves and stems. Lower levels in flowers and barely detected in roots and siliques.

The catalysed reaction is (3Z)-hex-3-en-1-ol + acetyl-CoA = (3Z)-hex-3-en-1-yl acetate + CoA. Its activity is regulated as follows. Inhibited by magnesium, calcium, cobalt, zinc and copper. Acyltransferase involved in the production of green leaf volatiles (GLVs). Uses acetyl-CoA as substrate, but not malonyl-CoA or benzoyl-CoA. Prefers primary, medium-chain-length, aliphatic alcohols. This chain is (Z)-3-hexen-1-ol acetyltransferase (CHAT), found in Arabidopsis thaliana (Mouse-ear cress).